Here is a 241-residue protein sequence, read N- to C-terminus: Uridylate kinase (241 aa).

9–10 (GS) provides a ligand contact to ATP. Gly44 provides a ligand contact to UMP. The ATP site is built by Gly45 and Arg49. UMP-binding positions include Asp66 and 114 to 120 (IMPGQTT). 3 residues coordinate ATP: Thr140, Tyr146, and Asp149.

The protein belongs to the UMP kinase family. Homohexamer.

The protein localises to the cytoplasm. The catalysed reaction is UMP + ATP = UDP + ADP. It participates in pyrimidine metabolism; CTP biosynthesis via de novo pathway; UDP from UMP (UMPK route): step 1/1. With respect to regulation, inhibited by UTP. In terms of biological role, catalyzes the reversible phosphorylation of UMP to UDP. In Haloquadratum walsbyi (strain DSM 16790 / HBSQ001), this protein is Uridylate kinase.